The following is a 336-amino-acid chain: CENP-A histone chaperone scm3 (336 aa).

The segment at 243 to 269 (RRRNPLLSSPKTPLRRSFSKSKVRNSN) is disordered. Residues 255 to 269 (PLRRSFSKSKVRNSN) show a composition bias toward basic residues.

Its subcellular location is the cytoplasm. It is found in the nucleus. Its function is as follows. Centromeric protein that plays a central role in the incorporation and maintenance of histone H3-like variant CENPA at centromeres. This chain is CENP-A histone chaperone scm3, found in Schizosaccharomyces pombe (strain 972 / ATCC 24843) (Fission yeast).